Reading from the N-terminus, the 353-residue chain is Paraneoplastic antigen Ma1 homolog (353 aa).

Belongs to the PNMA family. As to expression, predominantly expressed in testis. Very low levels in the brain, including in the piriform cortex, hippocampus and some subcortical nuclei.

The protein resides in the nucleus. It localises to the nucleolus. This Mus musculus (Mouse) protein is Paraneoplastic antigen Ma1 homolog (Pnma1).